The chain runs to 296 residues: Protease HtpX homolog (296 aa).

The next 2 helical transmembrane spans lie at 14–34 (VVLLIVFFCLLAAIGAAVGYL) and 39–59 (YQFGLVLALIIGVIYAVSMIF). Histidine 143 contributes to the Zn(2+) binding site. The active site involves glutamate 144. Zn(2+) is bound at residue histidine 147. The next 2 helical transmembrane spans lie at 158 to 178 (IAVALASAVTLISSIGSRMLF) and 195 to 215 (ILVLIFSILSLILAPLAASLV). Glutamate 224 contacts Zn(2+).

It belongs to the peptidase M48B family. Zn(2+) is required as a cofactor.

The protein localises to the cell membrane. The sequence is that of Protease HtpX homolog from Streptococcus agalactiae serotype Ia (strain ATCC 27591 / A909 / CDC SS700).